A 156-amino-acid polypeptide reads, in one-letter code: Small ribosomal subunit protein uS7 (156 aa).

Belongs to the universal ribosomal protein uS7 family. In terms of assembly, part of the 30S ribosomal subunit. Contacts proteins S9 and S11.

Functionally, one of the primary rRNA binding proteins, it binds directly to 16S rRNA where it nucleates assembly of the head domain of the 30S subunit. Is located at the subunit interface close to the decoding center, probably blocks exit of the E-site tRNA. The protein is Small ribosomal subunit protein uS7 of Bacillus velezensis (strain DSM 23117 / BGSC 10A6 / LMG 26770 / FZB42) (Bacillus amyloliquefaciens subsp. plantarum).